The following is a 108-amino-acid chain: MAATALAVRSRIGAWSVWAMQSRGFSSDTPEGVRSGAGAVRDAGGAFGKKEQADEERYFRARAREQLAALKKHHENEISHHVKEIERLQKEIERHKQSIKKLKNDDDD.

A mitochondrion-targeting transit peptide spans 1 to 25 (MAATALAVRSRIGAWSVWAMQSRGF). The tract at residues 25-48 (FSSDTPEGVRSGAGAVRDAGGAFG) is disordered. The tract at residues 26 to 52 (SSDTPEGVRSGAGAVRDAGGAFGKKEQ) is N-terminal inhibitory region. Positions 69 to 108 (ALKKHHENEISHHVKEIERLQKEIERHKQSIKKLKNDDDD) form a coiled coil. Residues 74–106 (HENEISHHVKEIERLQKEIERHKQSIKKLKNDD) form an antiparallel alpha-helical coiled coil region region. Lys-103 bears the N6-succinyllysine mark.

This sequence belongs to the ATPase inhibitor family. As to quaternary structure, homodimer; represents the active form and is present at a pH value below 6.5. Homotetramer; represents the inactive form and is present at a pH value above 7.0.

Its subcellular location is the mitochondrion. In terms of biological role, endogenous F(1)F(o)-ATPase inhibitor limiting ATP depletion when the mitochondrial membrane potential falls below a threshold and the F(1)F(o)-ATP synthase starts hydrolyzing ATP to pump protons out of the mitochondrial matrix. Required to avoid the consumption of cellular ATP when the F(1)F(o)-ATP synthase enzyme acts as an ATP hydrolase. Indirectly acts as a regulator of heme synthesis in erythroid tissues: regulates heme synthesis by modulating the mitochondrial pH and redox potential, allowing FECH to efficiently catalyze the incorporation of iron into protoporphyrin IX to produce heme. This is ATPase inhibitor, mitochondrial from Sus scrofa (Pig).